Reading from the N-terminus, the 448-residue chain is 3-phosphoshikimate 1-carboxyvinyltransferase (448 aa).

3-phosphoshikimate is bound by residues Lys-38, Ser-39, and Arg-43. Residue Lys-38 coordinates phosphoenolpyruvate. The phosphoenolpyruvate site is built by Gly-111 and Arg-140. The 3-phosphoshikimate site is built by Ser-185, Gln-187, Asp-335, and Lys-362. Gln-187 is a binding site for phosphoenolpyruvate. Asp-335 (proton acceptor) is an active-site residue. Residues Arg-366 and Arg-408 each coordinate phosphoenolpyruvate.

The protein belongs to the EPSP synthase family. In terms of assembly, monomer.

Its subcellular location is the cytoplasm. It carries out the reaction 3-phosphoshikimate + phosphoenolpyruvate = 5-O-(1-carboxyvinyl)-3-phosphoshikimate + phosphate. It participates in metabolic intermediate biosynthesis; chorismate biosynthesis; chorismate from D-erythrose 4-phosphate and phosphoenolpyruvate: step 6/7. Its function is as follows. Catalyzes the transfer of the enolpyruvyl moiety of phosphoenolpyruvate (PEP) to the 5-hydroxyl of shikimate-3-phosphate (S3P) to produce enolpyruvyl shikimate-3-phosphate and inorganic phosphate. The sequence is that of 3-phosphoshikimate 1-carboxyvinyltransferase from Gloeothece citriformis (strain PCC 7424) (Cyanothece sp. (strain PCC 7424)).